Reading from the N-terminus, the 249-residue chain is NAD(P)H-quinone oxidoreductase subunit T, chloroplastic (249 aa).

The transit peptide at 1-45 (MAYATSTYARTSCIILPKIQNGAHFTDDTKAFRRITARRVTRIYA) directs the protein to the chloroplast. Positions 44-84 (YASQGPTKPSKPSPGVDTRIHWESPDEGWIGGRSDPAKSVD) are disordered. The region spanning 106 to 172 (SHYQFLGVST…ETRRFYDWTL (67 aa)) is the J domain. The helical transmembrane segment at 224–244 (LTFDILIVLFAVCCIAFVIVF) threads the bilayer.

In terms of assembly, part of the chloroplast NDH complex, composed of a mixture of chloroplast and nucleus encoded subunits. Component of the electron donor-binding subcomplex, at least composed of NDHS, NDHT and NDHU.

The protein localises to the plastid. The protein resides in the chloroplast thylakoid membrane. The enzyme catalyses a plastoquinone + NADH + (n+1) H(+)(in) = a plastoquinol + NAD(+) + n H(+)(out). It carries out the reaction a plastoquinone + NADPH + (n+1) H(+)(in) = a plastoquinol + NADP(+) + n H(+)(out). Its function is as follows. NDH shuttles electrons from NAD(P)H:plastoquinone, via FMN and iron-sulfur (Fe-S) centers, to quinones in the photosynthetic chain and possibly in a chloroplast respiratory chain. The immediate electron acceptor for the enzyme in this species is believed to be plastoquinone. Couples the redox reaction to proton translocation, and thus conserves the redox energy in a proton gradient. Required for the accumulation of both the NDH subcomplex A and NDHS. This chain is NAD(P)H-quinone oxidoreductase subunit T, chloroplastic, found in Arabidopsis thaliana (Mouse-ear cress).